Consider the following 151-residue polypeptide: Putative pre-16S rRNA nuclease (151 aa).

This sequence belongs to the YqgF nuclease family.

It is found in the cytoplasm. In terms of biological role, could be a nuclease involved in processing of the 5'-end of pre-16S rRNA. This Myxococcus xanthus (strain DK1622) protein is Putative pre-16S rRNA nuclease.